A 310-amino-acid polypeptide reads, in one-letter code: Syntaxin-related protein KNOLLE (310 aa).

N-acetylmethionine is present on Met1. Residues 1–283 are Cytoplasmic-facing; that stretch reads MNDLMTKSFM…AKSHQRNSRK (283 aa). The stretch at 94 to 159 forms a coiled coil; that stretch reads NEIVSGLRKA…FQGLRQKMMS (66 aa). In terms of domain architecture, t-SNARE coiled-coil homology spans 212-274; sequence VVEIQDRYDA…ADGANELKTA (63 aa). Residues 284–304 form a helical; Anchor for type IV membrane protein membrane-spanning segment; the sequence is WMCIGIIVLLLIILIVVIPII. Over 305–310 the chain is Vesicular; it reads TSFSSS.

It belongs to the syntaxin family. Interacts with SNAP33 and/or NPSN11 to form a t-SNARE complex and with KEULE. Abundant in flowers and developing siliques. A low level expression is seen in the seedlings, roots, and leaves.

Its subcellular location is the membrane. In terms of biological role, involved in cytokinesis. Acts as a cell plate-specific syntaxin, required for the fusion of vesicles at the plane of cell division. The polypeptide is Syntaxin-related protein KNOLLE (KN) (Arabidopsis thaliana (Mouse-ear cress)).